We begin with the raw amino-acid sequence, 202 residues long: Dephospho-CoA kinase (202 aa).

One can recognise a DPCK domain in the interval 6–202 (KISVTGDPSS…QCFKALKGTI (197 aa)). Residue 14–19 (SSGKTE) participates in ATP binding.

This sequence belongs to the CoaE family.

Its subcellular location is the cytoplasm. The enzyme catalyses 3'-dephospho-CoA + ATP = ADP + CoA + H(+). Its pathway is cofactor biosynthesis; coenzyme A biosynthesis; CoA from (R)-pantothenate: step 5/5. In terms of biological role, catalyzes the phosphorylation of the 3'-hydroxyl group of dephosphocoenzyme A to form coenzyme A. The polypeptide is Dephospho-CoA kinase (Chlamydia trachomatis serovar D (strain ATCC VR-885 / DSM 19411 / UW-3/Cx)).